The following is a 308-amino-acid chain: Acetyl-coenzyme A carboxylase carboxyl transferase subunit beta (308 aa).

Positions 46–308 (LWVKCPDTGE…LMMGRGLKAA (263 aa)) constitute a CoA carboxyltransferase N-terminal domain.

The protein belongs to the AccD/PCCB family. In terms of assembly, acetyl-CoA carboxylase is a heterohexamer composed of biotin carboxyl carrier protein (AccB), biotin carboxylase (AccC) and two subunits each of ACCase subunit alpha (AccA) and ACCase subunit beta (AccD).

Its subcellular location is the cytoplasm. The catalysed reaction is N(6)-carboxybiotinyl-L-lysyl-[protein] + acetyl-CoA = N(6)-biotinyl-L-lysyl-[protein] + malonyl-CoA. It functions in the pathway lipid metabolism; malonyl-CoA biosynthesis; malonyl-CoA from acetyl-CoA: step 1/1. Its function is as follows. Component of the acetyl coenzyme A carboxylase (ACC) complex. Biotin carboxylase (BC) catalyzes the carboxylation of biotin on its carrier protein (BCCP) and then the CO(2) group is transferred by the transcarboxylase to acetyl-CoA to form malonyl-CoA. In Caulobacter sp. (strain K31), this protein is Acetyl-coenzyme A carboxylase carboxyl transferase subunit beta.